The chain runs to 250 residues: Small ribosomal subunit protein uS2 (250 aa).

The protein belongs to the universal ribosomal protein uS2 family.

This is Small ribosomal subunit protein uS2 from Paraburkholderia phytofirmans (strain DSM 17436 / LMG 22146 / PsJN) (Burkholderia phytofirmans).